The primary structure comprises 1052 residues: Isoleucine--tRNA ligase (1052 aa).

A 'HIGH' region motif is present at residues Pro58–His68. A 'KMSKS' region motif is present at residues Lys627–Ser631. Lys630 contacts ATP.

It belongs to the class-I aminoacyl-tRNA synthetase family. IleS type 2 subfamily. Monomer. Zn(2+) serves as cofactor.

It localises to the cytoplasm. It catalyses the reaction tRNA(Ile) + L-isoleucine + ATP = L-isoleucyl-tRNA(Ile) + AMP + diphosphate. In terms of biological role, catalyzes the attachment of isoleucine to tRNA(Ile). As IleRS can inadvertently accommodate and process structurally similar amino acids such as valine, to avoid such errors it has two additional distinct tRNA(Ile)-dependent editing activities. One activity is designated as 'pretransfer' editing and involves the hydrolysis of activated Val-AMP. The other activity is designated 'posttransfer' editing and involves deacylation of mischarged Val-tRNA(Ile). The chain is Isoleucine--tRNA ligase from Corynebacterium diphtheriae (strain ATCC 700971 / NCTC 13129 / Biotype gravis).